Here is a 180-residue protein sequence, read N- to C-terminus: Oligoribonuclease (180 aa).

One can recognise an Exonuclease domain in the interval 7 to 170 (LIWIDLEMTG…DDIRESIAEL (164 aa)). Y128 is a catalytic residue.

This sequence belongs to the oligoribonuclease family.

The protein resides in the cytoplasm. Its function is as follows. 3'-to-5' exoribonuclease specific for small oligoribonucleotides. The polypeptide is Oligoribonuclease (Pseudomonas putida (strain ATCC 700007 / DSM 6899 / JCM 31910 / BCRC 17059 / LMG 24140 / F1)).